The sequence spans 405 residues: Aspartokinase (405 aa).

7 to 10 lines the ATP pocket; that stretch reads KYGG. 25 to 30 is a binding site for substrate; it reads RIAHYR. Ser-41 provides a ligand contact to ATP. Residues 47–49, Glu-74, 125–126, 150–153, and Ser-153 contribute to the substrate site; these read TDE, LD, and RGGS. Residues 173-174, 179-184, and Arg-209 contribute to the ATP site; these read TD and YTTDPH. ACT domains follow at residues 263-342 and 344-405; these read IGLI…IAKV and IVGV…LDKA. Residues Asp-270, 274–275, 288–290, Gln-294, 355–356, 369–370, and 376–377 each bind substrate; these read IA, AVD, VP, NI, and SE.

It belongs to the aspartokinase family. As to quaternary structure, heterotetramer consisting of 2 isoforms Alpha (catalytic and regulation) and of a homodimer of 2 isoforms Beta (regulation and thermostability).

The catalysed reaction is L-aspartate + ATP = 4-phospho-L-aspartate + ADP. It participates in amino-acid biosynthesis; L-lysine biosynthesis via DAP pathway; (S)-tetrahydrodipicolinate from L-aspartate: step 1/4. It functions in the pathway amino-acid biosynthesis; L-methionine biosynthesis via de novo pathway; L-homoserine from L-aspartate: step 1/3. The protein operates within amino-acid biosynthesis; L-threonine biosynthesis; L-threonine from L-aspartate: step 1/5. Its activity is regulated as follows. Inhibited by threonine. Its function is as follows. Catalyzes the phosphorylation of the beta-carboxyl group of aspartic acid with ATP to yield 4-phospho-L-aspartate, which is involved in the branched biosynthetic pathway leading to the biosynthesis of amino acids threonine, isoleucine and methionine. The protein is Aspartokinase (ask) of Thermus thermophilus.